The chain runs to 287 residues: Protease HtpX (287 aa).

The next 2 helical transmembrane spans lie at 4–24 (IFLL…VMSI) and 33–53 (GGLL…SLAI). Histidine 139 is a binding site for Zn(2+). The active site involves glutamate 140. Position 143 (histidine 143) interacts with Zn(2+). The next 2 membrane-spanning stretches (helical) occupy residues 154–174 (LIQG…AGII) and 195–215 (AVVF…VAYF). Glutamate 220 contacts Zn(2+).

The protein belongs to the peptidase M48B family. Zn(2+) is required as a cofactor.

The protein resides in the cell inner membrane. The polypeptide is Protease HtpX (Shewanella frigidimarina (strain NCIMB 400)).